We begin with the raw amino-acid sequence, 243 residues long: MNSQSSRNETAATAVNGSDSAAASRDHKSGGGVLKRLKSRRNQVDRRPVTEEELRALGRDITPDEVLGLRAVARDYLCKLEDNIYNIDFTRFKIRDLETGTVLFEIAKPPHCDLDEEDDENRDADTSAGRFVRYQFTPAFLKLRTVGATVEFTVGDQPVTNFRMIERHYFQDRLLKSFDFDFGFCIPNSRNTCEHIYEFPQLPEDLIRLMIEHPYETRSDSFYFVDNKLIMHNKADYAYNGGQ.

Over residues 1-21 (MNSQSSRNETAATAVNGSDSA) the composition is skewed to polar residues. The interval 1-49 (MNSQSSRNETAATAVNGSDSAAASRDHKSGGGVLKRLKSRRNQVDRRPV) is disordered. Y134 contributes to the tetradecanoate binding site.

The protein belongs to the PDE6D/unc-119 family. Detected in embryo. Detected in larvae four days after fertilization, in retina and neural tissues (at protein level). Detected in embryos at the sphere stage, during gastrulation, somitogenesis and in swimming larvae, both within and outside of the developing nervous system. Detected in adults.

The protein resides in the cell projection. It is found in the cilium. Myristoyl-binding protein that acts as a cargo adapter: specifically binds the myristoyl moiety of a subset of N-terminally myristoylated proteins and is required for their localization. Plays a key role in localization of proteins to the primary cilium membrane. In Danio rerio (Zebrafish), this protein is Protein unc-119 homolog B (unc119b).